We begin with the raw amino-acid sequence, 164 residues long: Phospholipase A and acyltransferase 4 (164 aa).

The essential for its ability regulate keratinocyte differentiation stretch occupies residues 1–40 (MASPHQEPKPGDLIEIFRLGYEHWALYIGDGYVIHLAPPS). Over 1-134 (MASPHQEPKP…SRCKQVEKAK (134 aa)) the chain is Cytoplasmic. The region spanning 13–129 (LIEIFRLGYE…LRYGKSRCKQ (117 aa)) is the LRAT domain. Catalysis depends on residues H23 and H35. C113 (acyl-thioester intermediate) is an active-site residue. The tract at residues 124–164 (KSRCKQVEKAKVEVGVATALGILVVAGCSFAIRRYQKKATA) is interaction with TGM1. A helical membrane pass occupies residues 135 to 155 (VEVGVATALGILVVAGCSFAI). Topologically, residues 156–164 (RRYQKKATA) are lumenal.

Belongs to the H-rev107 family. As to quaternary structure, interacts with TGM1. Widely expressed.

The protein resides in the membrane. The catalysed reaction is a 1,2-diacyl-sn-glycero-3-phosphocholine + H2O = a 1-acyl-sn-glycero-3-phosphocholine + a fatty acid + H(+). It catalyses the reaction a 1,2-diacyl-sn-glycero-3-phosphocholine + H2O = a 2-acyl-sn-glycero-3-phosphocholine + a fatty acid + H(+). It carries out the reaction 1,2-dihexadecanoyl-sn-glycero-3-phosphocholine + H2O = 1-hexadecanoyl-sn-glycero-3-phosphocholine + hexadecanoate + H(+). The enzyme catalyses 1,2-dihexadecanoyl-sn-glycero-3-phosphocholine + H2O = 2-hexadecanoyl-sn-glycero-3-phosphocholine + hexadecanoate + H(+). The catalysed reaction is 1-hexadecanoyl-2-(9Z-octadecenoyl)-sn-glycero-3-phosphocholine + H2O = 2-(9Z-octadecenoyl)-sn-glycero-3-phosphocholine + hexadecanoate + H(+). It catalyses the reaction 1-hexadecanoyl-2-(9Z-octadecenoyl)-sn-glycero-3-phosphocholine + H2O = 1-hexadecanoyl-sn-glycero-3-phosphocholine + (9Z)-octadecenoate + H(+). It carries out the reaction 1-hexadecanoyl-2-(5Z,8Z,11Z,14Z-eicosatetraenoyl)-sn-glycero-3-phosphocholine + H2O = 2-(5Z,8Z,11Z,14Z)-eicosatetraenoyl-sn-glycero-3-phosphocholine + hexadecanoate + H(+). The enzyme catalyses 1-hexadecanoyl-2-(9Z,12Z-octadecadienoyl)-sn-glycero-3-phosphoethanolamine + H2O = 1-hexadecanoyl-sn-glycero-3-phosphoethanolamine + (9Z,12Z)-octadecadienoate + H(+). The catalysed reaction is 1-hexadecanoyl-2-(9Z,12Z-octadecadienoyl)-sn-glycero-3-phosphoethanolamine + H2O = 2-(9Z,12Z)-octadecadienoyl-sn-glycero-3-phosphoethanolamine + hexadecanoate + H(+). It catalyses the reaction 1-hexadecanoyl-2-(5Z,8Z,11Z,14Z-eicosatetraenoyl)-sn-glycero-3-phosphoethanolamine + H2O = 2-(5Z,8Z,11Z,14Z)-eicosatetraenoyl-sn-glycero-3-phosphoethanolamine + hexadecanoate + H(+). It carries out the reaction 1-hexanoyl-2-acyl-sn-glycero-3-phosphocholine + H2O = hexanoate + a 2-acyl-sn-glycero-3-phosphocholine + H(+). The enzyme catalyses 1,2-diheptadecanoyl-sn-glycero-3-phosphoethanolamine + 1-(9Z-octadecenoyl)-2-hexadecanoyl-sn-glycero-3-phosphocholine = 1,2-diheptadecanoyl-sn-glycero-3-phospho-N-hexadecanoyl-ethanolamine + 1-(9Z-octadecenoyl)-sn-glycero-3-phosphocholine + H(+). The catalysed reaction is 1,2-diheptadecanoyl-sn-glycero-3-phosphoethanolamine + 1-(9Z-octadecenoyl)-2-hexadecanoyl-sn-glycero-3-phosphocholine = 1,2-diheptadecanoyl-sn-glycero-3-phospho-N-(9Z-octadecenoyl)-ethanolamine + 2-hexadecanoyl-sn-glycero-3-phosphocholine + H(+). In terms of biological role, exhibits both phospholipase A1/2 and acyltransferase activities. Shows phospholipase A1 (PLA1) and A2 (PLA2), catalyzing the calcium-independent release of fatty acids from the sn-1 or sn-2 position of glycerophospholipids. For most substrates, PLA1 activity is much higher than PLA2 activity. Shows O-acyltransferase activity, catalyzing the transfer of a fatty acyl group from glycerophospholipid to the hydroxyl group of lysophospholipid. Shows N-acyltransferase activity, catalyzing the calcium-independent transfer of a fatty acyl group at the sn-1 position of phosphatidylcholine (PC) and other glycerophospholipids to the primary amine of phosphatidylethanolamine (PE), forming N-acylphosphatidylethanolamine (NAPE), which serves as precursor for N-acylethanolamines (NAEs). Promotes keratinocyte differentiation via activation of TGM1. In Homo sapiens (Human), this protein is Phospholipase A and acyltransferase 4.